The sequence spans 591 residues: L-fucose isomerase (591 aa).

Active-site proton acceptor residues include E338 and D362. Positions 338, 362, and 529 each coordinate Mn(2+).

This sequence belongs to the L-fucose isomerase family. Mn(2+) serves as cofactor.

It is found in the cytoplasm. It catalyses the reaction L-fucose = L-fuculose. The protein operates within carbohydrate degradation; L-fucose degradation; L-lactaldehyde and glycerone phosphate from L-fucose: step 1/3. Its function is as follows. Converts the aldose L-fucose into the corresponding ketose L-fuculose. The chain is L-fucose isomerase from Bacteroides thetaiotaomicron (strain ATCC 29148 / DSM 2079 / JCM 5827 / CCUG 10774 / NCTC 10582 / VPI-5482 / E50).